Reading from the N-terminus, the 406-residue chain is Tyrosine--tRNA ligase (406 aa).

Y35 serves as a coordination point for L-tyrosine. The short motif at 40-49 (PTADSLHVGH) is the 'HIGH' region element. The L-tyrosine site is built by Y168 and Q172. The 'KMSKS' region signature appears at 228 to 232 (KMGKT). K231 lines the ATP pocket. The region spanning 340-404 (AELLDILVEA…RGKKNYNKIV (65 aa)) is the S4 RNA-binding domain.

The protein belongs to the class-I aminoacyl-tRNA synthetase family. TyrS type 1 subfamily. As to quaternary structure, homodimer.

It is found in the cytoplasm. It carries out the reaction tRNA(Tyr) + L-tyrosine + ATP = L-tyrosyl-tRNA(Tyr) + AMP + diphosphate + H(+). Catalyzes the attachment of tyrosine to tRNA(Tyr) in a two-step reaction: tyrosine is first activated by ATP to form Tyr-AMP and then transferred to the acceptor end of tRNA(Tyr). In Clostridium perfringens (strain 13 / Type A), this protein is Tyrosine--tRNA ligase.